A 555-amino-acid chain; its full sequence is Glutamine--tRNA ligase (555 aa).

Positions 34–44 match the 'HIGH' region motif; sequence PEPNGFLHIGH. ATP-binding positions include 35–37 and 41–47; these read EPN and HIGHAKS. Aspartate 67 and tyrosine 212 together coordinate L-glutamine. Residues threonine 231, 261–262, and 269–271 each bind ATP; these read RL and LSK. Residues 268–272 carry the 'KMSKS' region motif; sequence VLSKR.

This sequence belongs to the class-I aminoacyl-tRNA synthetase family. Monomer.

It localises to the cytoplasm. It carries out the reaction tRNA(Gln) + L-glutamine + ATP = L-glutaminyl-tRNA(Gln) + AMP + diphosphate. The chain is Glutamine--tRNA ligase from Alteromonas mediterranea (strain DSM 17117 / CIP 110805 / LMG 28347 / Deep ecotype).